The chain runs to 503 residues: TGF-beta receptor type-1 (503 aa).

The signal sequence occupies residues 1–29; that stretch reads MEAAAAAPRRPQLLIVLVAAATLLPGAKA. Residues 30–126 lie on the Extracellular side of the membrane; that stretch reads LQCFCHLCTK…QSAGLGPVEL (97 aa). Cystine bridges form between Cys32/Cys50, Cys34/Cys37, Cys44/Cys67, Cys82/Cys96, and Cys97/Cys102. Residue Asn41 is glycosylated (N-linked (GlcNAc...) asparagine). The helical transmembrane segment at 127-147 threads the bilayer; the sequence is AAVIAGPVCFVCIALMLMVYI. The Cytoplasmic portion of the chain corresponds to 148–503; the sequence is CHNRTVIHHR…QLSQQEGIKM (356 aa). Ser165 carries the post-translational modification Phosphoserine. One can recognise a GS domain in the interval 175-204; it reads TTLKDLIYDMTTSGSGSGLPLLVQRTIART. Residues Thr185 and Thr186 each carry the phosphothreonine; by TGFBR2 modification. Phosphoserine; by TGFBR2 occurs at positions 187, 189, and 191. The FKBP1A-binding signature appears at 193-194; it reads LP. Residues 205-495 enclose the Protein kinase domain; the sequence is IVLQESIGKG…LRIKKTLSQL (291 aa). Residues 211 to 219 and Lys232 contribute to the ATP site; that span reads IGKGRFGEV. Residue Lys268 forms a Glycyl lysine isopeptide (Lys-Gly) (interchain with G-Cter in ubiquitin) linkage. Asp333 acts as the Proton acceptor in catalysis. Residue Lys391 forms a Glycyl lysine isopeptide (Lys-Gly) (interchain with G-Cter in SUMO) linkage.

The protein belongs to the protein kinase superfamily. TKL Ser/Thr protein kinase family. TGFB receptor subfamily. Homodimer; in the endoplasmic reticulum but also at the cell membrane. Heterohexamer; TGFB1, TGFB2 and TGFB3 homodimeric ligands assemble a functional receptor composed of two TGFBR1 and TGFBR2 heterodimers to form a ligand-receptor heterohexamer. The respective affinity of TGBRB1 and TGFBR2 for the ligands may modulate the kinetics of assembly of the receptor and may explain the different biological activities of TGFB1, TGFB2 and TGFB3. Component of a complex composed of TSC22D1 (via N-terminus), TGFBR1 and TGFBR2; the interaction between TSC22D1 and TGFBR1 is inhibited by SMAD7 and promoted by TGFB1. Interacts with CD109; inhibits TGF-beta receptor activation in keratinocytes. Interacts with RBPMS. Interacts (unphosphorylated) with FKBP1A; prevents TGFBR1 phosphorylation by TGFBR2 and stabilizes it in the inactive conformation. Interacts with SMAD2, SMAD3 and ZFYVE9; ZFYVE9 recruits SMAD2 and SMAD3 to the TGF-beta receptor. Interacts with TRAF6 and MAP3K7; induces MAP3K7 activation by TRAF6. Interacts with PARD6A; involved in TGF-beta induced epithelial to mesenchymal transition. Interacts with NEDD4L. Interacts with SMAD7, SMURF1 and SMURF2; SMAD7 recruits NEDD4L, SMURF1 and SMURF2 to the TGF-beta receptor. Interacts with USP15 and VPS39. Interacts with SDCBP (via C-terminus). Interacts with CAV1 and this interaction is impaired in the presence of SDCBP. Interacts with APPL1; interaction is TGF beta dependent; mediates trafficking of the TGFBR1 from the endosomes to the nucleus via microtubules in a TRAF6-dependent manner. Interacts with GPR50; this interaction promotes the constitutive activation of SMAD signaling pathway. It depends on Mg(2+) as a cofactor. Mn(2+) is required as a cofactor. Post-translationally, phosphorylated at basal levels in the absence of ligand. Activated upon phosphorylation by TGFBR2, mainly in the GS domain. Phosphorylation in the GS domain abrogates FKBP1A-binding. In terms of processing, N-Glycosylated. Ubiquitinated; undergoes ubiquitination catalyzed by several E3 ubiquitin ligases including SMURF1, SMURF2 and NEDD4L2. Results in the proteasomal and/or lysosomal degradation of the receptor thereby negatively regulating its activity. Deubiquitinated by USP15, leading to stabilization of the protein and enhanced TGF-beta signal. Its ubiquitination and proteasome-mediated degradation is negatively regulated by SDCBP. Ubiquitinated by BFAR via'Lys-63'-linked ubiquitination at Lys-268, leading to TGF-beta signaling activation.

It localises to the cell membrane. The protein localises to the cell junction. It is found in the tight junction. Its subcellular location is the membrane raft. The protein resides in the cell surface. It carries out the reaction L-threonyl-[receptor-protein] + ATP = O-phospho-L-threonyl-[receptor-protein] + ADP + H(+). The catalysed reaction is L-seryl-[receptor-protein] + ATP = O-phospho-L-seryl-[receptor-protein] + ADP + H(+). With respect to regulation, kept in an inactive conformation by FKBP1A preventing receptor activation in absence of ligand. CD109 is another inhibitor of the receptor. Its function is as follows. Transmembrane serine/threonine kinase forming with the TGF-beta type II serine/threonine kinase receptor, TGFBR2, the non-promiscuous receptor for the TGF-beta cytokines TGFB1, TGFB2 and TGFB3. Transduces the TGFB1, TGFB2 and TGFB3 signal from the cell surface to the cytoplasm and is thus regulating a plethora of physiological and pathological processes including cell cycle arrest in epithelial and hematopoietic cells, control of mesenchymal cell proliferation and differentiation, wound healing, extracellular matrix production, immunosuppression and carcinogenesis. The formation of the receptor complex composed of 2 TGFBR1 and 2 TGFBR2 molecules symmetrically bound to the cytokine dimer results in the phosphorylation and the activation of TGFBR1 by the constitutively active TGFBR2. Activated TGFBR1 phosphorylates SMAD2 which dissociates from the receptor and interacts with SMAD4. The SMAD2-SMAD4 complex is subsequently translocated to the nucleus where it modulates the transcription of the TGF-beta-regulated genes. This constitutes the canonical SMAD-dependent TGF-beta signaling cascade. Also involved in non-canonical, SMAD-independent TGF-beta signaling pathways. For instance, TGFBR1 induces TRAF6 autoubiquitination which in turn results in MAP3K7 ubiquitination and activation to trigger apoptosis. Also regulates epithelial to mesenchymal transition through a SMAD-independent signaling pathway through PARD6A phosphorylation and activation. The polypeptide is TGF-beta receptor type-1 (Tgfbr1) (Mus musculus (Mouse)).